We begin with the raw amino-acid sequence, 513 residues long: MRRIKIFDTTLRDGEQSPGASMSVEEKVEMALMLEDLGVDLIEAGFPVSSPVQFEAVKRVAEAVQRPIVVGLARCVEKDIDAAYEALKDRPKDKRMIHVFIATSPIHRKYKLRMEKEEILERVRKYVTYARQFFDLVEFSAEDASRTEVPFLIEVYRTAIESGATTINVPDTVGYALPDEFGELIRTLKEGVPGIENVDLSVHCHNDLGLAVANSIAAVQNGATQVEVTLNGIGERAGNCALEEFVMALKVRKDRLPYETGIRTELIYPASRLLTHITGLIPARNKPIVGENVFLHESGIHQDGVLKHRETYEIMKPSDIGRSSETLVLGRHSGKHALRKKLESYGIKLDDETFQKVFEKFTELADRKKEVYDDDLFSIVSEVLKEPLNGYRLVHFHVHTGNTLLPTAAVVLQVGNEKKEAAETGNGPVDAIFKAIDKALGLQPKLEEYIIQAVGTGKNAQGEVKLTLKIDGELYSGRGVSTDIVEASAIAYINAINKYLIAKGLLRKNGGVE.

The Pyruvate carboxyltransferase domain maps to 4–268 (IKIFDTTLRD…ETGIRTELIY (265 aa)). Mn(2+) contacts are provided by D13, H203, H205, and N239. A regulatory domain region spans residues 392–513 (RLVHFHVHTG…GLLRKNGGVE (122 aa)).

The protein belongs to the alpha-IPM synthase/homocitrate synthase family. LeuA type 1 subfamily. As to quaternary structure, homodimer. Requires Mn(2+) as cofactor.

It localises to the cytoplasm. It carries out the reaction 3-methyl-2-oxobutanoate + acetyl-CoA + H2O = (2S)-2-isopropylmalate + CoA + H(+). It functions in the pathway amino-acid biosynthesis; L-leucine biosynthesis; L-leucine from 3-methyl-2-oxobutanoate: step 1/4. In terms of biological role, catalyzes the condensation of the acetyl group of acetyl-CoA with 3-methyl-2-oxobutanoate (2-ketoisovalerate) to form 3-carboxy-3-hydroxy-4-methylpentanoate (2-isopropylmalate). This Thermotoga neapolitana (strain ATCC 49049 / DSM 4359 / NBRC 107923 / NS-E) protein is 2-isopropylmalate synthase.